The sequence spans 219 residues: N-(5'-phosphoribosyl)anthranilate isomerase (219 aa).

The protein belongs to the TrpF family.

It catalyses the reaction N-(5-phospho-beta-D-ribosyl)anthranilate = 1-(2-carboxyphenylamino)-1-deoxy-D-ribulose 5-phosphate. It participates in amino-acid biosynthesis; L-tryptophan biosynthesis; L-tryptophan from chorismate: step 3/5. This is N-(5'-phosphoribosyl)anthranilate isomerase from Bradyrhizobium sp. (strain BTAi1 / ATCC BAA-1182).